A 386-amino-acid polypeptide reads, in one-letter code: ABC transporter permease protein NatB (386 aa).

The next 6 membrane-spanning stretches (helical) occupy residues threonine 19 to glutamate 39, alanine 172 to methionine 192, tryptophan 226 to leucine 246, alanine 273 to methionine 293, alanine 300 to serine 320, and alanine 353 to alanine 373.

In terms of assembly, the complex is composed of NatA and NatB.

It is found in the cell membrane. It carries out the reaction Na(+)(in) + ATP + H2O = Na(+)(out) + ADP + phosphate + H(+). Functionally, part of an ABC transporter that catalyzes ATP-dependent electrogenic sodium extrusion. The polypeptide is ABC transporter permease protein NatB (Bacillus subtilis (strain 168)).